A 253-amino-acid chain; its full sequence is HTH-type transcriptional regulator YdeO (253 aa).

Residues 137–233 (GKVRNIVNMK…GNSPKRVSKE (97 aa)) form the HTH araC/xylS-type domain. 2 DNA-binding regions (H-T-H motif) span residues 154–175 (KDIC…KQEQ) and 200–223 (VNKI…RKHF).

In terms of biological role, induces the expression of gadE and mdtEF. Could also regulate the expression of other genes involved in acid resistance. The sequence is that of HTH-type transcriptional regulator YdeO (ydeO) from Escherichia coli (strain K12).